The chain runs to 654 residues: Acetyl-coenzyme A synthetase (654 aa).

CoA is bound by residues 196–199 (RGGK) and threonine 316. Residues 392–394 (GEP), 416–421 (DTWWQT), aspartate 507, and arginine 522 contribute to the ATP site. Serine 530 is a CoA binding site. Residue arginine 533 participates in ATP binding. 2 residues coordinate Mg(2+): valine 544 and valine 549. Lysine 619 is modified (N6-acetyllysine).

The protein belongs to the ATP-dependent AMP-binding enzyme family. Requires Mg(2+) as cofactor. In terms of processing, acetylated. Deacetylation by the SIR2-homolog deacetylase activates the enzyme.

It carries out the reaction acetate + ATP + CoA = acetyl-CoA + AMP + diphosphate. Functionally, catalyzes the conversion of acetate into acetyl-CoA (AcCoA), an essential intermediate at the junction of anabolic and catabolic pathways. AcsA undergoes a two-step reaction. In the first half reaction, AcsA combines acetate with ATP to form acetyl-adenylate (AcAMP) intermediate. In the second half reaction, it can then transfer the acetyl group from AcAMP to the sulfhydryl group of CoA, forming the product AcCoA. This Chromobacterium violaceum (strain ATCC 12472 / DSM 30191 / JCM 1249 / CCUG 213 / NBRC 12614 / NCIMB 9131 / NCTC 9757 / MK) protein is Acetyl-coenzyme A synthetase.